The chain runs to 207 residues: Probable RNA 2'-phosphotransferase (207 aa).

This sequence belongs to the KptA/TPT1 family.

Its function is as follows. Removes the 2'-phosphate from RNA via an intermediate in which the phosphate is ADP-ribosylated by NAD followed by a presumed transesterification to release the RNA and generate ADP-ribose 1''-2''-cyclic phosphate (APPR&gt;P). May function as an ADP-ribosylase. The protein is Probable RNA 2'-phosphotransferase of Methanosarcina barkeri (strain Fusaro / DSM 804).